The chain runs to 368 residues: Chorismate synthase (368 aa).

R48 and R54 together coordinate NADP(+). FMN contacts are provided by residues R125–S127, N238–A239, G278, K293–S297, and R319.

This sequence belongs to the chorismate synthase family. As to quaternary structure, homotetramer. Requires FMNH2 as cofactor.

The catalysed reaction is 5-O-(1-carboxyvinyl)-3-phosphoshikimate = chorismate + phosphate. The protein operates within metabolic intermediate biosynthesis; chorismate biosynthesis; chorismate from D-erythrose 4-phosphate and phosphoenolpyruvate: step 7/7. Its function is as follows. Catalyzes the anti-1,4-elimination of the C-3 phosphate and the C-6 proR hydrogen from 5-enolpyruvylshikimate-3-phosphate (EPSP) to yield chorismate, which is the branch point compound that serves as the starting substrate for the three terminal pathways of aromatic amino acid biosynthesis. This reaction introduces a second double bond into the aromatic ring system. The chain is Chorismate synthase from Methylibium petroleiphilum (strain ATCC BAA-1232 / LMG 22953 / PM1).